Consider the following 361-residue polypeptide: Prostaglandin D2 receptor (361 aa).

The Extracellular segment spans residues 1–21 (MRPLFYRCHNTTSVEKGNSAT). Asparagine 10 carries N-linked (GlcNAc...) asparagine glycosylation. The chain crosses the membrane as a helical span at residues 22–42 (MGGVLFSTGLVGNLLALGLLA). At 43-58 (RSGLGSCPPRSPRPPP) the chain is on the cytoplasmic side. A helical membrane pass occupies residues 59–79 (SVFYVLVFGLTITDLLGKCLV). Over 80 to 107 (SPFVLSAYAQNRSLRELVPGSDSSLCQA) the chain is Extracellular. N-linked (GlcNAc...) asparagine glycosylation is present at asparagine 90. Cysteine 105 and cysteine 183 are oxidised to a cystine. Residues 108 to 128 (FAFIMSFFGLASTLQLLAMAL) form a helical membrane-spanning segment. Residues 129-150 (ECWLSLGHPFFHRRHLTPRRGA) are Cytoplasmic-facing. A helical membrane pass occupies residues 151-171 (MVAPVVGAFCLAFCALPLVGF). Over 172-195 (GKFVQYCPGTWCFFQMVHEERSLS) the chain is Extracellular. Residues 196–216 (VLSYSVLYASLMLLLVLAIVL) form a helical membrane-spanning segment. At 217–262 (CNLSAMRNLYAMHLRLRGLLRPGSRERAEPGAGEREATPLHLEELD) the chain is on the cytoplasmic side. The helical transmembrane segment at 263–283 (HLLLLALMTVLFTMCSLPLIY) threads the bilayer. Residues 284–310 (RAYYGAFKAVPEQNGTTEETEDLRALR) lie on the Extracellular side of the membrane. Asparagine 297 carries N-linked (GlcNAc...) asparagine glycosylation. Residues 311–331 (FLSVISIVDPWIFIIFRTSVF) form a helical membrane-spanning segment. Over 332 to 361 (RMFFRKIFIRPLIYRNWHSNSCQTNMESSL) the chain is Cytoplasmic.

Belongs to the G-protein coupled receptor 1 family.

It is found in the cell membrane. Its function is as follows. Receptor for prostaglandin D2 (PGD2). The activity of this receptor is mainly mediated by G(s) proteins that stimulate adenylate cyclase, resulting in an elevation of intracellular cAMP. A mobilization of calcium is also observed, but without formation of inositol 1,4,5-trisphosphate. Involved in PLA2G3-dependent maturation of mast cells. PLA2G3 is secreted by immature mast cells and acts on nearby fibroblasts upstream to PTDGS to synthesize PGD2, which in turn promotes mast cell maturation and degranulation via PTGDR. The protein is Prostaglandin D2 receptor (PTGDR) of Bos taurus (Bovine).